Consider the following 205-residue polypeptide: SCO2-like protein RC0895 (205 aa).

Residues cysteine 82, cysteine 86, and histidine 172 each coordinate Cu cation.

This sequence belongs to the SCO1/2 family.

In Rickettsia conorii (strain ATCC VR-613 / Malish 7), this protein is SCO2-like protein RC0895.